A 119-amino-acid chain; its full sequence is Protein TusC (119 aa).

Belongs to the DsrF/TusC family. In terms of assembly, heterohexamer, formed by a dimer of trimers. The hexameric TusBCD complex contains 2 copies each of TusB, TusC and TusD. The TusBCD complex interacts with TusE.

The protein localises to the cytoplasm. Functionally, part of a sulfur-relay system required for 2-thiolation of 5-methylaminomethyl-2-thiouridine (mnm(5)s(2)U) at tRNA wobble positions. In Pectobacterium carotovorum subsp. carotovorum (strain PC1), this protein is Protein TusC.